Consider the following 416-residue polypeptide: Glutamyl-tRNA reductase (416 aa).

Residues 49–52 (TCNR), S105, 110–112 (EPQ), and Q116 each bind substrate. The active-site Nucleophile is C50. NADP(+) is bound at residue 185 to 190 (GAGETI).

The protein belongs to the glutamyl-tRNA reductase family. As to quaternary structure, homodimer.

The catalysed reaction is (S)-4-amino-5-oxopentanoate + tRNA(Glu) + NADP(+) = L-glutamyl-tRNA(Glu) + NADPH + H(+). It functions in the pathway porphyrin-containing compound metabolism; protoporphyrin-IX biosynthesis; 5-aminolevulinate from L-glutamyl-tRNA(Glu): step 1/2. Its function is as follows. Catalyzes the NADPH-dependent reduction of glutamyl-tRNA(Glu) to glutamate 1-semialdehyde (GSA). This is Glutamyl-tRNA reductase from Shewanella putrefaciens (strain CN-32 / ATCC BAA-453).